The chain runs to 71 residues: UPF0437 protein asl1434 (71 aa).

The protein belongs to the UPF0437 family.

This Nostoc sp. (strain PCC 7120 / SAG 25.82 / UTEX 2576) protein is UPF0437 protein asl1434.